The sequence spans 955 residues: 2-oxoglutarate dehydrogenase E1 component (955 aa).

Belongs to the alpha-ketoglutarate dehydrogenase family. As to quaternary structure, homodimer. Part of the 2-oxoglutarate dehydrogenase (OGDH) complex composed of E1 (2-oxoglutarate dehydrogenase), E2 (dihydrolipoamide succinyltransferase) and E3 (dihydrolipoamide dehydrogenase); the complex contains multiple copies of the three enzymatic components (E1, E2 and E3). It depends on thiamine diphosphate as a cofactor.

It catalyses the reaction N(6)-[(R)-lipoyl]-L-lysyl-[protein] + 2-oxoglutarate + H(+) = N(6)-[(R)-S(8)-succinyldihydrolipoyl]-L-lysyl-[protein] + CO2. Its function is as follows. E1 component of the 2-oxoglutarate dehydrogenase (OGDH) complex which catalyzes the decarboxylation of 2-oxoglutarate, the first step in the conversion of 2-oxoglutarate to succinyl-CoA and CO(2). This is 2-oxoglutarate dehydrogenase E1 component from Bacillus mycoides (strain KBAB4) (Bacillus weihenstephanensis).